The chain runs to 88 residues: Acyl-CoA-binding protein homolog (88 aa).

Residues 3–88 enclose the ACB domain; that stretch reads PQADFDKAAG…AHELIEKYGL (86 aa). Residues Lys-15, 30-34, Lys-52, Lys-56, and Tyr-75 each bind an acyl-CoA; that span reads YGLYK.

The protein belongs to the ACBP family. In terms of tissue distribution, brain. Is selectively expressed in glial cells.

It is found in the endoplasmic reticulum. The protein resides in the golgi apparatus. May play important functions in the control of brain and pituitary activities. May regulate GABA neurotransmission through a paracrine and/or autocrine mechanism. May not bind acyl-CoA esters. In Pelophylax ridibundus (Marsh frog), this protein is Acyl-CoA-binding protein homolog.